The following is a 388-amino-acid chain: DNA replication and repair protein RecF (388 aa).

30–37 (GANGNGKT) contributes to the ATP binding site.

The protein belongs to the RecF family.

Its subcellular location is the cytoplasm. Functionally, the RecF protein is involved in DNA metabolism; it is required for DNA replication and normal SOS inducibility. RecF binds preferentially to single-stranded, linear DNA. It also seems to bind ATP. This chain is DNA replication and repair protein RecF, found in Nocardia farcinica (strain IFM 10152).